We begin with the raw amino-acid sequence, 357 residues long: Cobalt-precorrin-5B C(1)-methyltransferase (357 aa).

It belongs to the CbiD family.

It catalyses the reaction Co-precorrin-5B + S-adenosyl-L-methionine = Co-precorrin-6A + S-adenosyl-L-homocysteine. Its pathway is cofactor biosynthesis; adenosylcobalamin biosynthesis; cob(II)yrinate a,c-diamide from sirohydrochlorin (anaerobic route): step 6/10. Catalyzes the methylation of C-1 in cobalt-precorrin-5B to form cobalt-precorrin-6A. The protein is Cobalt-precorrin-5B C(1)-methyltransferase of Rhodospirillum rubrum (strain ATCC 11170 / ATH 1.1.1 / DSM 467 / LMG 4362 / NCIMB 8255 / S1).